Here is a 784-residue protein sequence, read N- to C-terminus: Ubiquitin carboxyl-terminal hydrolase 1 (784 aa).

2 disordered regions span residues 1–21 (MPGVIPSESNGLSRGSPSKKN) and 34–56 (KRALDFTDSQENEEKTSEYRGSE). Residues 7–16 (SESNGLSRGS) are compositionally biased toward polar residues. A phosphoserine mark is found at serine 16 and serine 42. The span at 45–56 (NEEKTSEYRGSE) shows a compositional bias: basic and acidic residues. Serine 67 bears the Phosphoserine mark. A USP domain is found at 81-784 (VGLNNLGNTC…TPYLLFYKKL (704 aa)). The active-site Nucleophile is the cysteine 90. Basic and acidic residues-rich tracts occupy residues 233-243 (VEEQSLQKEET) and 252-264 (DSMRNTEDVKEQL). 2 disordered regions span residues 233–342 (VEEQ…INWL) and 362–414 (TTNQ…KSGN). Phosphoserine is present on serine 474. Residue histidine 592 is the Proton acceptor of the active site. Positions 684 to 725 (NPDKVVGTPFTDNRNSETNDTTNGTHESDRNKESSDQTGVNM) are disordered. The segment covering 693–708 (FTDNRNSETNDTTNGT) has biased composition (polar residues). Basic and acidic residues predominate over residues 709–718 (HESDRNKESS). The residue at position 767 (serine 767) is a Phosphoserine.

Belongs to the peptidase C19 family. In terms of assembly, interacts with FANCD2 and PCNA. Interacts with WDR48. Interacts with ATAD5; the interaction regulates USP1-mediated PCNA deubiquitination. Post-translationally, autocatalytic cleavage of USP1 following UV irradiation inactivates it, leading to an increase in ubiquitinated PCNA, recruitment of POLH and translesion synthesis. Ubiquitinated by the CRL2(KLHDC2) complex following autocatalytic cleavage, leading to its degradation: the CRL2(KLHDC2) complex recognizes the diglycine (Gly-Gly) at the C-terminus.

It is found in the nucleus. It catalyses the reaction Thiol-dependent hydrolysis of ester, thioester, amide, peptide and isopeptide bonds formed by the C-terminal Gly of ubiquitin (a 76-residue protein attached to proteins as an intracellular targeting signal).. Its function is as follows. Negative regulator of DNA damage repair which specifically deubiquitinates monoubiquitinated FANCD2. Also involved in PCNA-mediated translesion synthesis (TLS) by deubiquitinating monoubiquitinated PCNA. Has almost no deubiquitinating activity by itself and requires the interaction with WDR48 to have a high activity. The polypeptide is Ubiquitin carboxyl-terminal hydrolase 1 (Mus musculus (Mouse)).